The sequence spans 505 residues: Lysine--tRNA ligase (505 aa).

Mg(2+) is bound by residues glutamate 415 and glutamate 422.

This sequence belongs to the class-II aminoacyl-tRNA synthetase family. Homodimer. Requires Mg(2+) as cofactor.

The protein resides in the cytoplasm. It catalyses the reaction tRNA(Lys) + L-lysine + ATP = L-lysyl-tRNA(Lys) + AMP + diphosphate. The protein is Lysine--tRNA ligase of Enterobacter sp. (strain 638).